Reading from the N-terminus, the 375-residue chain is Queuine tRNA-ribosyltransferase (375 aa).

Aspartate 90 functions as the Proton acceptor in the catalytic mechanism. Substrate-binding positions include 90–94 (DSGGF), aspartate 144, glutamine 193, and glycine 220. Residues 251 to 257 (GVGTPED) are RNA binding. The active-site Nucleophile is aspartate 270. An RNA binding; important for wobble base 34 recognition region spans residues 275–279 (TRNAR). Cysteine 308, cysteine 310, cysteine 313, and histidine 339 together coordinate Zn(2+).

This sequence belongs to the queuine tRNA-ribosyltransferase family. As to quaternary structure, homodimer. Within each dimer, one monomer is responsible for RNA recognition and catalysis, while the other monomer binds to the replacement base PreQ1. Requires Zn(2+) as cofactor.

It carries out the reaction 7-aminomethyl-7-carbaguanine + guanosine(34) in tRNA = 7-aminomethyl-7-carbaguanosine(34) in tRNA + guanine. It functions in the pathway tRNA modification; tRNA-queuosine biosynthesis. Functionally, catalyzes the base-exchange of a guanine (G) residue with the queuine precursor 7-aminomethyl-7-deazaguanine (PreQ1) at position 34 (anticodon wobble position) in tRNAs with GU(N) anticodons (tRNA-Asp, -Asn, -His and -Tyr). Catalysis occurs through a double-displacement mechanism. The nucleophile active site attacks the C1' of nucleotide 34 to detach the guanine base from the RNA, forming a covalent enzyme-RNA intermediate. The proton acceptor active site deprotonates the incoming PreQ1, allowing a nucleophilic attack on the C1' of the ribose to form the product. After dissociation, two additional enzymatic reactions on the tRNA convert PreQ1 to queuine (Q), resulting in the hypermodified nucleoside queuosine (7-(((4,5-cis-dihydroxy-2-cyclopenten-1-yl)amino)methyl)-7-deazaguanosine). The protein is Queuine tRNA-ribosyltransferase of Methylibium petroleiphilum (strain ATCC BAA-1232 / LMG 22953 / PM1).